The chain runs to 408 residues: MQIPNRLQPFYENLVFERHDNQMVINFGPQHPSAHGQLRLILELEGEKVTRAVPDVGYLHRGMEKMGENMIYNEFIPTTDRMDYIAASSNNHAFALTVEKLLGIEVPRRAKVIRMMIVELNRIISHLFWLATHALDVGAMSIFLYCFREREFAMDLMEDYCGARLTHSSIRIGGVPLDLPAGWLEKLKSFLEKMPENIALYEGLLSENRIWKMRLENVGIITPEMAKSWGCSGVALRGSGIQWDLRKEQPYELYDEVEFDIPVSDSGDSYGRYKLYMEEMRQTVKILHQLIEMYPSTSSEIMAHAPQYISAPKEQIMTQNYSLMQHFVLVTQGMRPPVGEVYCATESPKGELGFFIRSEGEPYPYRLKIRAPSFYHTGILQDLLPGGYIADVVTIIGNLNIVFGEIDR.

The protein belongs to the complex I 49 kDa subunit family. NDH-1 is composed of 14 different subunits. Subunits NuoB, C, D, E, F, and G constitute the peripheral sector of the complex.

The protein localises to the cell inner membrane. It catalyses the reaction a quinone + NADH + 5 H(+)(in) = a quinol + NAD(+) + 4 H(+)(out). NDH-1 shuttles electrons from NADH, via FMN and iron-sulfur (Fe-S) centers, to quinones in the respiratory chain. The immediate electron acceptor for the enzyme in this species is believed to be ubiquinone. Couples the redox reaction to proton translocation (for every two electrons transferred, four hydrogen ions are translocated across the cytoplasmic membrane), and thus conserves the redox energy in a proton gradient. The polypeptide is NADH-quinone oxidoreductase subunit D (Wolinella succinogenes (strain ATCC 29543 / DSM 1740 / CCUG 13145 / JCM 31913 / LMG 7466 / NCTC 11488 / FDC 602W) (Vibrio succinogenes)).